Consider the following 865-residue polypeptide: DNA topoisomerase 1 (865 aa).

A Toprim domain is found at Lys-3–Ile-142. Glu-9 is a binding site for Mg(2+). Residues Leu-37–Gly-65 are disordered. The segment covering Thr-39–Lys-54 has biased composition (low complexity). Residue Asp-111 participates in Mg(2+) binding. A Topo IA-type catalytic domain is found at Asn-158–Leu-575. The segment at Ser-192–Gln-197 is interaction with DNA. The active-site O-(5'-phospho-DNA)-tyrosine intermediate is Tyr-319. C4-type zinc fingers lie at residues Cys-599 to Cys-630, Cys-662 to Cys-689, and Cys-711 to Cys-736.

It belongs to the type IA topoisomerase family. As to quaternary structure, monomer. Requires Mn(2+) as cofactor. Ca(2+) serves as cofactor.

It carries out the reaction ATP-independent breakage of single-stranded DNA, followed by passage and rejoining.. In terms of biological role, releases the supercoiling and torsional tension of DNA, which is introduced during the DNA replication and transcription, by transiently cleaving and rejoining one strand of the DNA duplex. Introduces a single-strand break via transesterification at a target site in duplex DNA. The scissile phosphodiester is attacked by the catalytic tyrosine of the enzyme, resulting in the formation of a DNA-(5'-phosphotyrosyl)-enzyme intermediate and the expulsion of a 3'-OH DNA strand. The free DNA strand then undergoes passage around the unbroken strand, thus removing DNA supercoils. Finally, in the religation step, the DNA 3'-OH attacks the covalent intermediate to expel the active-site tyrosine and restore the DNA phosphodiester backbone. This Escherichia coli (strain K12) protein is DNA topoisomerase 1.